The chain runs to 828 residues: MKLSRRSFMKANAVAAAAAAAGLSVPGVARAVVGQQEAIKWDKAPCRFCGTGCGVLVGTQQGRVVACQGDPDAPVNRGLNCIKGYFLPKIMYGKDRLTQPLLRMKNGKYDKEGEFTPITWDQAFDVMEEKFKTALKEKGPESIGMFGSGQWTIWEGYAASKLFKAGFRSNNIDPNARHCMASAVVGFMRTFGMDEPMGCYDDIEQADAFVLWGANMAEMHPILWSRITNRRLSNQNVTVAVLSTYQHRSFELADNGIIFTPQSDLVILNYIANYIIQNNAINQDFFSKHVNLRKGATDIGYGLRPTHPLEKAAKNPGSDASEPMSFEDYKAFVAEYTLEKTAEMTGVPKDQLEQLAQLYADPNKKVISYWTMGFNQHTRGVWANNLVYNLHLLTGKISQPGCGPFSLTGQPSACGTAREVGTFAHRLPADMVVTNEKHRDICEKKWNIPSGTIPAKIGLHAVAQDRALKDGKLNVYWTMCTNNMQAGPNINEERMPGWRDPRNFIIVSDPYPTVSALAADLILPTAMWVEKEGAYGNAERRTQFWRQQVQAPGEAKSDLWQLVQFSRRFKTEEVWPEELLAKKPELRGKTLYEVLYATPEVSKFPVSELAEDQLNDESRELGFYLQKGLFEEYAWFGRGHGHDLAPFDDYHKARGLRWPVVNGKETQWRYSEGNDPYVKMGEGYKFYGKPDGKAVIFALPFEPAAEAPDEEYDLWLSTGRVLEHWHTGSMTRRVPELHRAFPEAVLFIHPLDAKARDLRRGDKVKVVSRRGEVISIVETRGRNRPPQGLVYMPFFDAAQLVNKLTLDATDPLSKETDFKKCAVKLEKV.

The segment at residues Met1 to Ala31 is a signal peptide (tat-type signal). The region spanning Ile39–Asp95 is the 4Fe-4S Mo/W bis-MGD-type domain. Residues Cys46, Cys49, Cys53, and Cys81 each coordinate [4Fe-4S] cluster. Residues Lys83, Gln150, Asn175, Cys179, Trp212–Met219, Ser243–His247, Gln262–Asp264, Met372, Gln376, Asn482, Ser508–Asp509, Lys531, Asp558, and Thr718–Thr727 each bind Mo-bis(molybdopterin guanine dinucleotide). A substrate-binding site is contributed by Phe794. Mo-bis(molybdopterin guanine dinucleotide) is bound by residues Asn802 and Lys819.

The protein belongs to the prokaryotic molybdopterin-containing oxidoreductase family. NasA/NapA/NarB subfamily. As to quaternary structure, component of the periplasmic nitrate reductase NapAB complex composed of NapA and NapB. Requires [4Fe-4S] cluster as cofactor. The cofactor is Mo-bis(molybdopterin guanine dinucleotide). Predicted to be exported by the Tat system. The position of the signal peptide cleavage has not been experimentally proven.

It localises to the periplasm. The enzyme catalyses 2 Fe(II)-[cytochrome] + nitrate + 2 H(+) = 2 Fe(III)-[cytochrome] + nitrite + H2O. Functionally, catalytic subunit of the periplasmic nitrate reductase complex NapAB. Receives electrons from NapB and catalyzes the reduction of nitrate to nitrite. The protein is Periplasmic nitrate reductase of Escherichia coli O7:K1 (strain IAI39 / ExPEC).